The primary structure comprises 473 residues: Bifunctional protein HldE (473 aa).

The segment at 1 to 317 is ribokinase; it reads MKLSMPRFDQ…RRAIQREEGS (317 aa). An ATP-binding site is contributed by 194-197; that stretch reads NLSE. D263 is a catalytic residue. Residues 343-473 form a cytidylyltransferase region; sequence FTNGCFDILH…TAIVEKIRKN (131 aa).

This sequence in the N-terminal section; belongs to the carbohydrate kinase PfkB family. It in the C-terminal section; belongs to the cytidylyltransferase family. As to quaternary structure, homodimer.

The catalysed reaction is D-glycero-beta-D-manno-heptose 7-phosphate + ATP = D-glycero-beta-D-manno-heptose 1,7-bisphosphate + ADP + H(+). It carries out the reaction D-glycero-beta-D-manno-heptose 1-phosphate + ATP + H(+) = ADP-D-glycero-beta-D-manno-heptose + diphosphate. It functions in the pathway nucleotide-sugar biosynthesis; ADP-L-glycero-beta-D-manno-heptose biosynthesis; ADP-L-glycero-beta-D-manno-heptose from D-glycero-beta-D-manno-heptose 7-phosphate: step 1/4. It participates in nucleotide-sugar biosynthesis; ADP-L-glycero-beta-D-manno-heptose biosynthesis; ADP-L-glycero-beta-D-manno-heptose from D-glycero-beta-D-manno-heptose 7-phosphate: step 3/4. Functionally, catalyzes the phosphorylation of D-glycero-D-manno-heptose 7-phosphate at the C-1 position to selectively form D-glycero-beta-D-manno-heptose-1,7-bisphosphate. Its function is as follows. Catalyzes the ADP transfer from ATP to D-glycero-beta-D-manno-heptose 1-phosphate, yielding ADP-D-glycero-beta-D-manno-heptose. The protein is Bifunctional protein HldE of Pseudomonas putida (strain W619).